We begin with the raw amino-acid sequence, 247 residues long: 5'-nucleotidase SurE (247 aa).

Residues Asp8, Asp9, Ser39, and Asn91 each contribute to the a divalent metal cation site.

This sequence belongs to the SurE nucleotidase family. Requires a divalent metal cation as cofactor.

It is found in the cytoplasm. The enzyme catalyses a ribonucleoside 5'-phosphate + H2O = a ribonucleoside + phosphate. Nucleotidase that shows phosphatase activity on nucleoside 5'-monophosphates. The sequence is that of 5'-nucleotidase SurE from Ruthia magnifica subsp. Calyptogena magnifica.